The primary structure comprises 226 residues: RING-H2 finger protein ATL75 (226 aa).

Residues 60 to 80 traverse the membrane as a helical segment; the sequence is LMLLSVLICGIICCLGLHYII. Residues 136–178 form an RING-type; atypical zinc finger; sequence CVICLSDFVSGEQIRMLPKCHHGFHVRCIDKWLQQHLTCPKCR.

This sequence belongs to the RING-type zinc finger family. ATL subfamily.

It localises to the membrane. The enzyme catalyses S-ubiquitinyl-[E2 ubiquitin-conjugating enzyme]-L-cysteine + [acceptor protein]-L-lysine = [E2 ubiquitin-conjugating enzyme]-L-cysteine + N(6)-ubiquitinyl-[acceptor protein]-L-lysine.. It participates in protein modification; protein ubiquitination. This chain is RING-H2 finger protein ATL75 (ATL75), found in Arabidopsis thaliana (Mouse-ear cress).